Consider the following 556-residue polypeptide: Arginine--tRNA ligase (556 aa).

A 'HIGH' region motif is present at residues 132-142 (ANPTGDLHLGH).

This sequence belongs to the class-I aminoacyl-tRNA synthetase family. Monomer.

The protein localises to the cytoplasm. It catalyses the reaction tRNA(Arg) + L-arginine + ATP = L-arginyl-tRNA(Arg) + AMP + diphosphate. In Listeria monocytogenes serovar 1/2a (strain ATCC BAA-679 / EGD-e), this protein is Arginine--tRNA ligase.